The following is a 448-amino-acid chain: Bifunctional protein GlmU (448 aa).

Residues 1-229 form a pyrophosphorylase region; sequence MNNHTLNIII…NDEIQGINNL (229 aa). Residues 11 to 14, K25, Q76, 81 to 82, 103 to 105, G140, E154, N169, and N227 contribute to the UDP-N-acetyl-alpha-D-glucosamine site; these read LAAG, GT, and YGD. D105 provides a ligand contact to Mg(2+). N227 contacts Mg(2+). A linker region spans residues 230–250; the sequence is LQLVRAEKIYQKQQAKLLLLS. Residues 251–448 are N-acetyltransferase; it reads GIMIYNPSNF…NEKKQIHKKL (198 aa). A UDP-N-acetyl-alpha-D-glucosamine-binding site is contributed by K351. The Proton acceptor role is filled by H363. 2 residues coordinate UDP-N-acetyl-alpha-D-glucosamine: Y366 and N377. Residues A380, 386–387, S405, and A423 contribute to the acetyl-CoA site; that span reads NY.

It in the N-terminal section; belongs to the N-acetylglucosamine-1-phosphate uridyltransferase family. The protein in the C-terminal section; belongs to the transferase hexapeptide repeat family. In terms of assembly, homotrimer. It depends on Mg(2+) as a cofactor.

The protein resides in the cytoplasm. The enzyme catalyses alpha-D-glucosamine 1-phosphate + acetyl-CoA = N-acetyl-alpha-D-glucosamine 1-phosphate + CoA + H(+). It catalyses the reaction N-acetyl-alpha-D-glucosamine 1-phosphate + UTP + H(+) = UDP-N-acetyl-alpha-D-glucosamine + diphosphate. It functions in the pathway nucleotide-sugar biosynthesis; UDP-N-acetyl-alpha-D-glucosamine biosynthesis; N-acetyl-alpha-D-glucosamine 1-phosphate from alpha-D-glucosamine 6-phosphate (route II): step 2/2. Its pathway is nucleotide-sugar biosynthesis; UDP-N-acetyl-alpha-D-glucosamine biosynthesis; UDP-N-acetyl-alpha-D-glucosamine from N-acetyl-alpha-D-glucosamine 1-phosphate: step 1/1. The protein operates within bacterial outer membrane biogenesis; LPS lipid A biosynthesis. In terms of biological role, catalyzes the last two sequential reactions in the de novo biosynthetic pathway for UDP-N-acetylglucosamine (UDP-GlcNAc). The C-terminal domain catalyzes the transfer of acetyl group from acetyl coenzyme A to glucosamine-1-phosphate (GlcN-1-P) to produce N-acetylglucosamine-1-phosphate (GlcNAc-1-P), which is converted into UDP-GlcNAc by the transfer of uridine 5-monophosphate (from uridine 5-triphosphate), a reaction catalyzed by the N-terminal domain. This is Bifunctional protein GlmU from Buchnera aphidicola subsp. Baizongia pistaciae (strain Bp).